The following is a 203-amino-acid chain: Small ribosomal subunit protein uS4 (203 aa).

Residues 93-153 (RRLDNIVYRL…DKSKNLQQVK (61 aa)) form the S4 RNA-binding domain.

This sequence belongs to the universal ribosomal protein uS4 family. As to quaternary structure, part of the 30S ribosomal subunit. Contacts protein S5. The interaction surface between S4 and S5 is involved in control of translational fidelity.

One of the primary rRNA binding proteins, it binds directly to 16S rRNA where it nucleates assembly of the body of the 30S subunit. In terms of biological role, with S5 and S12 plays an important role in translational accuracy. The sequence is that of Small ribosomal subunit protein uS4 from Lactobacillus gasseri (strain ATCC 33323 / DSM 20243 / BCRC 14619 / CIP 102991 / JCM 1131 / KCTC 3163 / NCIMB 11718 / NCTC 13722 / AM63).